The sequence spans 540 residues: Phenylalanine--tRNA ligase beta subunit (540 aa).

Residues 268 to 343 (LQHKSIKITA…ITYGYNNLSP (76 aa)) enclose the B5 domain. The Mg(2+) site is built by D321, D327, E330, and E331.

It belongs to the phenylalanyl-tRNA synthetase beta subunit family. Type 2 subfamily. Tetramer of two alpha and two beta subunits. Requires Mg(2+) as cofactor.

Its subcellular location is the cytoplasm. The catalysed reaction is tRNA(Phe) + L-phenylalanine + ATP = L-phenylalanyl-tRNA(Phe) + AMP + diphosphate + H(+). The polypeptide is Phenylalanine--tRNA ligase beta subunit (Sulfurisphaera tokodaii (strain DSM 16993 / JCM 10545 / NBRC 100140 / 7) (Sulfolobus tokodaii)).